Here is a 99-residue protein sequence, read N- to C-terminus: DASH complex subunit DAD1 (99 aa).

A disordered region spans residues 69 to 99 (GMNHQTRENTRDENNKISSSDTEDENNNNKI). Over residues 73–83 (QTRENTRDENN) the composition is skewed to basic and acidic residues. Residues 89-99 (DTEDENNNNKI) show a composition bias toward acidic residues.

The protein belongs to the DASH complex DAD1 family. As to quaternary structure, component of the DASH complex consisting of ASK1, DAD1, DAD2, DAD3, DAD4, DAM1, DUO1, HSK3, SPC19 and SPC34, with a stoichiometry of one copy of each subunit per complex. Multiple DASH complexes oligomerize to form a ring that encircles spindle microtubules and organizes the rod-like NDC80 complexes of the outer kinetochore. DASH complex oligomerization strengthens microtubule attachments. On cytoplasmic microtubules, DASH complexes appear to form patches instead of rings.

It localises to the chromosome. The protein resides in the centromere. The protein localises to the kinetochore. Its subcellular location is the cytoplasm. It is found in the cytoskeleton. It localises to the spindle. The protein resides in the nucleus. Component of the DASH complex that connects microtubules with kinetochores and couples microtubule depolymerisation to chromosome movement; it is involved in retrieving kinetochores to the spindle poles before their re-orientation on the spindle in early mitosis and allows microtubule depolymerization to pull chromosomes apart and resist detachment during anaphase. Kinetochores, consisting of a centromere-associated inner segment and a microtubule-contacting outer segment, play a crucial role in chromosome segregation by mediating the physical connection between centromeric DNA and microtubules. Kinetochores also serve as an input point for the spindle assembly checkpoint, which delays anaphase until all chromosomes have bioriented on the mitotic spindle. This chain is DASH complex subunit DAD1, found in Candida albicans (strain SC5314 / ATCC MYA-2876) (Yeast).